The chain runs to 485 residues: MTITPQNLIALLPLLIVGLTVVVVMLSIAWRRNHFLNATLSVIGLNAALVSLWFVGQAGAMDVTPLMRVDGFAMLYTGLVLLASLATCTFAYPWLEDYNDNKDEFYLLVLIAALGGILLANANHLASLFLGIELISLPLFGLVGYAFRQKRSLEASIKYTILSAAASSFLLFGMALVYAQSGDLSFVALGKNLGDGMLNEPLLLAGFGLMIVGLGFKLSLVPFHLWTPDVYQGAPAPVSTFLATASKIAIFGVVMRLFLYAPVGDSEAIRVVLAIIAFASIIFGNLMALSQTNIKRLLGYSSISHLGYLLVALIALQTGEMSMEAVGVYLVGYLFSSLGAFGVVSLMSSPYRGPDADSLFSYRGLFWHRPILAAVMTVMMLSLAGIPMTLGFIGKFYVLAVGVQAHLWWLVGAVVVGSAIGLYYYLRVAVSLYLHAPEQPGRDAPSNWQYSAGGIVVLISALLVLVLGVWPQPLISIVRLAMPLM.

The next 14 helical transmembrane spans lie at 8–28 (LIAL…MLSI), 35–55 (FLNA…LWFV), 71–91 (GFAM…CTFA), 105–125 (FYLL…ANHL), 127–147 (SLFL…GYAF), 159–179 (YTIL…LVYA), 203–223 (LLAG…LVPF), 235–255 (PAPV…GVVM), 271–291 (VVLA…ALSQ), 297–317 (LLGY…IALQ), 326–346 (VGVY…VVSL), 373–393 (AAVM…LGFI), 408–430 (WWLV…RVAV), and 455–475 (IVVL…QPLI).

This sequence belongs to the complex I subunit 2 family. NDH-1 is composed of 13 different subunits. Subunits NuoA, H, J, K, L, M, N constitute the membrane sector of the complex.

It localises to the cell inner membrane. The catalysed reaction is a quinone + NADH + 5 H(+)(in) = a quinol + NAD(+) + 4 H(+)(out). In terms of biological role, NDH-1 shuttles electrons from NADH, via FMN and iron-sulfur (Fe-S) centers, to quinones in the respiratory chain. The immediate electron acceptor for the enzyme in this species is believed to be ubiquinone. Couples the redox reaction to proton translocation (for every two electrons transferred, four hydrogen ions are translocated across the cytoplasmic membrane), and thus conserves the redox energy in a proton gradient. The chain is NADH-quinone oxidoreductase subunit N from Escherichia coli O6:K15:H31 (strain 536 / UPEC).